Reading from the N-terminus, the 221-residue chain is Probable septum site-determining protein MinC (221 aa).

The protein belongs to the MinC family. As to quaternary structure, interacts with MinD and FtsZ.

Its function is as follows. Cell division inhibitor that blocks the formation of polar Z ring septums. Rapidly oscillates between the poles of the cell to destabilize FtsZ filaments that have formed before they mature into polar Z rings. Prevents FtsZ polymerization. The chain is Probable septum site-determining protein MinC from Aliivibrio salmonicida (strain LFI1238) (Vibrio salmonicida (strain LFI1238)).